A 183-amino-acid chain; its full sequence is UPF0398 protein LSL_0930 (183 aa).

This sequence belongs to the UPF0398 family.

This is UPF0398 protein LSL_0930 from Ligilactobacillus salivarius (strain UCC118) (Lactobacillus salivarius).